The sequence spans 417 residues: MSLSKKLTLDKLDVKGKRVIMRVDFNVPMKRNQVTNNQRIKASLPSIRYCLDNGARSVVLMSHLGRPDGVAMPDKYSLEPVAAELKSLLGKDVLFLKDCVGSEAEQACANPPAGSVILLENLRFHVEEEGKGQDPSGNKLKAEPDKVEAFRASLSKLGDVYVNDAFGTAHRAHSSMVGVNLPQKASGFLMKKELDYFAKALENPERPFLAILGGAKVADKIQLIKNMLDKVNEMIIGGGMAFTFLKVLNNMEIGASLFDKEGATIVKEIMAKAEKNRVNITFPVDFVIADKFEENAKVGQATVASGIPAGWVALDCGPETNKKYAQVVARAKLIVWNGPLGVFEWDAFANGTKALMDEIVKATSKGCITIIGGGDTATCCAKWNTEDKVSHVSTGGGASLELLEGKVLPGVEALSNL.

Residue Ser-2 is modified to N-acetylserine. Phosphoserine occurs at positions 2 and 4. Residue Lys-11 is modified to N6-acetyllysine. 10 residues coordinate (2R)-3-phosphoglycerate: Val-23, Asp-24, Phe-25, Asn-26, Gln-38, Arg-39, Ser-62, His-63, Gly-65, and Arg-66. N6-acetyllysine occurs at positions 75, 86, and 97. The (2R)-3-phosphoglycerate site is built by Leu-122 and Arg-123. N6-acetyllysine is present on residues Lys-131 and Lys-146. (2R)-3-phosphoglycerate contacts are provided by His-170 and Arg-171. A Phosphotyrosine modification is found at Tyr-196. Position 199 is an N6-acetyllysine (Lys-199). Residue Gly-214 participates in ADP binding. Gly-214 is a binding site for CDP. Residues Ala-215 and Lys-216 each coordinate AMP. ATP is bound at residue Ala-215. Ala-215 contributes to the Mg(2+) binding site. Positions 218 and 219 each coordinate Mg(2+). Asp-219 is a binding site for CDP. Position 220 (Lys-220) interacts with AMP. Lys-220 lines the ATP pocket. Gly-238 is a binding site for ADP. Gly-238 is a CDP binding site. Gly-239 serves as a coordination point for AMP. Gly-239 lines the ATP pocket. 2 positions are modified to N6-acetyllysine: Lys-267 and Lys-291. Ala-313 provides a ligand contact to AMP. Residue Ala-313 coordinates ATP. CDP contacts are provided by Gly-338 and Phe-343. An ADP-binding site is contributed by Phe-343. Glu-344 serves as a coordination point for AMP. Glu-344, Asp-375, and Thr-376 together coordinate ATP. Asp-375 is a Mg(2+) binding site.

The protein belongs to the phosphoglycerate kinase family. In terms of assembly, monomer. Mg(2+) is required as a cofactor. As to expression, testis specific.

It localises to the cytoplasm. It carries out the reaction (2R)-3-phosphoglycerate + ATP = (2R)-3-phospho-glyceroyl phosphate + ADP. It participates in carbohydrate degradation; glycolysis; pyruvate from D-glyceraldehyde 3-phosphate: step 2/5. Functionally, essential for sperm motility and male fertility but is not required for the completion of spermatogenesis. In Sus scrofa (Pig), this protein is Phosphoglycerate kinase 2.